The sequence spans 493 residues: Galactose-1-phosphate uridylyltransferase 2 (493 aa).

This sequence belongs to the galactose-1-phosphate uridylyltransferase type 2 family.

Its subcellular location is the cytoplasm. The catalysed reaction is alpha-D-galactose 1-phosphate + UDP-alpha-D-glucose = alpha-D-glucose 1-phosphate + UDP-alpha-D-galactose. The protein operates within carbohydrate metabolism; galactose metabolism. This chain is Galactose-1-phosphate uridylyltransferase 2 (galT2), found in Streptococcus pneumoniae (strain ATCC BAA-255 / R6).